A 325-amino-acid chain; its full sequence is DNA-directed RNA polymerase subunit alpha (325 aa).

The interval 1-231 (MQTSLLKPKI…DQLSVFAALE (231 aa)) is alpha N-terminal domain (alpha-NTD). Residues 246–325 (IDPILLRPVD…ENWPPAGLDK (80 aa)) are alpha C-terminal domain (alpha-CTD).

This sequence belongs to the RNA polymerase alpha chain family. As to quaternary structure, homodimer. The RNAP catalytic core consists of 2 alpha, 1 beta, 1 beta' and 1 omega subunit. When a sigma factor is associated with the core the holoenzyme is formed, which can initiate transcription.

The enzyme catalyses RNA(n) + a ribonucleoside 5'-triphosphate = RNA(n+1) + diphosphate. DNA-dependent RNA polymerase catalyzes the transcription of DNA into RNA using the four ribonucleoside triphosphates as substrates. In Burkholderia mallei (strain NCTC 10247), this protein is DNA-directed RNA polymerase subunit alpha.